The chain runs to 212 residues: 3-demethoxyubiquinol 3-hydroxylase (212 aa).

The segment at 21–42 (SRMSRPLPVPQESAVTEAAPEL) is disordered. Residues Glu61, Glu91, His94, Glu143, Glu175, and His178 each coordinate Fe cation.

It belongs to the COQ7 family. The cofactor is Fe cation.

Its subcellular location is the cell membrane. It catalyses the reaction a 5-methoxy-2-methyl-3-(all-trans-polyprenyl)benzene-1,4-diol + AH2 + O2 = a 3-demethylubiquinol + A + H2O. It functions in the pathway cofactor biosynthesis; ubiquinone biosynthesis. Functionally, catalyzes the hydroxylation of 2-nonaprenyl-3-methyl-6-methoxy-1,4-benzoquinol during ubiquinone biosynthesis. The sequence is that of 3-demethoxyubiquinol 3-hydroxylase from Paraburkholderia xenovorans (strain LB400).